The primary structure comprises 154 residues: Ribosome maturation factor RimP (154 aa).

Belongs to the RimP family.

The protein resides in the cytoplasm. Functionally, required for maturation of 30S ribosomal subunits. This is Ribosome maturation factor RimP from Heliobacterium modesticaldum (strain ATCC 51547 / Ice1).